The following is a 514-amino-acid chain: Triacylglyceride transporter MAB_2807 (514 aa).

A run of 11 helical transmembrane segments spans residues I19 to V39, Q58 to G78, L88 to T108, V118 to L138, L157 to T177, A178 to V198, V210 to Y230, L239 to L259, P278 to V298, V316 to L336, and I344 to P364. The beta-hairpin stretch occupies residues V371–P380. 3 helical membrane-spanning segments follow: residues D385–L405, V420–I440, and M485–S505.

Belongs to the major facilitator superfamily. P55 (TC 2.A.1.3.34) family.

Its subcellular location is the cell inner membrane. In terms of biological role, in association with lipoprotein LprG probably transports triacyglycerides (TAG) across the inner cell membrane into the periplasm; TAG probably regulates lipid metabolism and growth regulation and plays a structural role in the outer membrane. TAG (and maybe other lipids) enters the central cavity of the P55 transporter from within the cell inner membrane via clefts on the cytoplasmic face of P55 between TM5-TM8 and TM2-TM11. From there the lipid is probably transferred to the hydrophobic cavity of LprG. Involved in drug susceptibilty, its expression partially complements the antibiotic susceptibilty of a double lprG-mfs deletion. Probably does not function as a bona fide drug efflux pump, but instead plays a role in outer membrane biogenesis. Probably required with LprG for normal surface localization of lipoarabinomannan (LAM). The polypeptide is Triacylglyceride transporter MAB_2807 (Mycobacteroides abscessus (strain ATCC 19977 / DSM 44196 / CCUG 20993 / CIP 104536 / JCM 13569 / NCTC 13031 / TMC 1543 / L948) (Mycobacterium abscessus)).